A 255-amino-acid polypeptide reads, in one-letter code: tRNA (guanine-N(1)-)-methyltransferase (255 aa).

Residues Gly-114 and 134-139 each bind S-adenosyl-L-methionine; that span reads IGDYIL.

This sequence belongs to the RNA methyltransferase TrmD family. In terms of assembly, homodimer.

The protein resides in the cytoplasm. The enzyme catalyses guanosine(37) in tRNA + S-adenosyl-L-methionine = N(1)-methylguanosine(37) in tRNA + S-adenosyl-L-homocysteine + H(+). Functionally, specifically methylates guanosine-37 in various tRNAs. The chain is tRNA (guanine-N(1)-)-methyltransferase from Blochmanniella pennsylvanica (strain BPEN).